The primary structure comprises 203 residues: MKLLHIDSSILGDNSASRQLSREVVEAWKAADPSVEVVYRDLAADAIAHFSAATLVAAGTPEDVRDAAQAFEAKLSAETLEEFLAADAVVIGAPMYNFTVPTQLKAWIDRVAVAGKTFRYTEAGPQGLCGNKKVVLVSTAGGLHAGQPTGAGHEDFLKVFLGFIGITDLEIVRAHGLAYGPEQRSQAIDAAQAQIASELFAAA.

Residues Ser-9, Ser-15 to Ser-17, Met-95 to Phe-98, and Thr-139 to Gly-142 each bind FMN.

The protein belongs to the azoreductase type 1 family. As to quaternary structure, homodimer. It depends on FMN as a cofactor.

The catalysed reaction is 2 a quinone + NADH + H(+) = 2 a 1,4-benzosemiquinone + NAD(+). It catalyses the reaction N,N-dimethyl-1,4-phenylenediamine + anthranilate + 2 NAD(+) = 2-(4-dimethylaminophenyl)diazenylbenzoate + 2 NADH + 2 H(+). Quinone reductase that provides resistance to thiol-specific stress caused by electrophilic quinones. Functionally, also exhibits azoreductase activity. Catalyzes the reductive cleavage of the azo bond in aromatic azo compounds to the corresponding amines. The sequence is that of FMN-dependent NADH:quinone oxidoreductase 1 from Pseudomonas putida (strain ATCC 47054 / DSM 6125 / CFBP 8728 / NCIMB 11950 / KT2440).